The following is a 50-amino-acid chain: ANACTKQADCAEDECCLDNLFFKRPYCEMRYGAGKRCAAASVYKEDKDLY.

In terms of tissue distribution, expressed by the venom gland.

Its subcellular location is the secreted. Its function is as follows. Possible neurotoxin. This Ancylometes sp. (South American fishing spider) protein is U3-ctenitoxin-Asp1a.